A 199-amino-acid chain; its full sequence is Transmembrane protein 9B (199 aa).

A signal peptide spans Met-1–Ala-34. Asn-61 carries N-linked (GlcNAc...) asparagine glycosylation. The chain crosses the membrane as a helical span at residues Ile-106–Val-126. 2 positions are modified to phosphoserine: Ser-143 and Ser-190.

It belongs to the TMEM9 family. In terms of processing, N-glycosylated.

It is found in the lysosome membrane. It localises to the early endosome membrane. In terms of biological role, enhances production of pro-inflammatory cytokines induced by TNF, IL1B, and TLR ligands. Has a role in TNF activation of both the NF-kappaB and MAPK pathways. This Mus musculus (Mouse) protein is Transmembrane protein 9B (Tmem9b).